The sequence spans 319 residues: tRNA uridine(34) hydroxylase (319 aa).

The 95-residue stretch at 125 to 219 (LDENTVVIDA…YGKDPEVQGD (95 aa)) folds into the Rhodanese domain. The active-site Cysteine persulfide intermediate is the cysteine 179.

The protein belongs to the TrhO family.

It catalyses the reaction uridine(34) in tRNA + AH2 + O2 = 5-hydroxyuridine(34) in tRNA + A + H2O. In terms of biological role, catalyzes oxygen-dependent 5-hydroxyuridine (ho5U) modification at position 34 in tRNAs. This Lactococcus lactis subsp. cremoris (strain MG1363) protein is tRNA uridine(34) hydroxylase.